Here is a 206-residue protein sequence, read N- to C-terminus: Protein GET1 (206 aa).

At 1-4 (MPSL) the chain is on the lumenal side. The helical transmembrane segment at 5-24 (LITALFLNVIIYVINTVGAA) threads the bilayer. The Cytoplasmic segment spans residues 25 to 110 (TVDGLLWLLY…TFDITIKIAR (86 aa)). Residues 75–100 (AKLRRRHDKALEAYEAKNNELTQSKS) adopt a coiled-coil conformation. A helical transmembrane segment spans residues 111–131 (WAATSGLMLFLQFWYSKTPIF). The Lumenal portion of the chain corresponds to 132-155 (TLPPGWIPWQVQWVLSFPRAPMGT). A helical membrane pass occupies residues 156–172 (VSIQIWSGACATVVALV). Residues 173-206 (GDAMKASLAYVSKPKIDRIKLGATMEGKEGKKRQ) are Cytoplasmic-facing.

Belongs to the WRB/GET1 family. Interacts with GET3.

It localises to the endoplasmic reticulum membrane. In terms of biological role, required for the post-translational delivery of tail-anchored (TA) proteins to the endoplasmic reticulum. Acts as a membrane receptor for soluble GET3, which recognizes and selectively binds the transmembrane domain of TA proteins in the cytosol. This chain is Protein GET1, found in Ajellomyces capsulatus (strain H143) (Darling's disease fungus).